A 365-amino-acid chain; its full sequence is Phospho-N-acetylmuramoyl-pentapeptide-transferase (365 aa).

The next 10 membrane-spanning stretches (helical) occupy residues 2–22 (ISLI…TPLL), 51–71 (TLGG…SALY), 80–100 (PSWS…LGFI), 118–138 (GKFI…LILP), 167–187 (VAIV…TNAI), 196–216 (LAAG…FWEF), 234–254 (PLDL…FLWY), 256–276 (SNPA…GLFA), 277–297 (AMSI…LFVI), and 340–360 (FWMI…GDWV).

Belongs to the glycosyltransferase 4 family. MraY subfamily. Mg(2+) is required as a cofactor.

The protein localises to the cell membrane. It carries out the reaction UDP-N-acetyl-alpha-D-muramoyl-L-alanyl-gamma-D-glutamyl-meso-2,6-diaminopimeloyl-D-alanyl-D-alanine + di-trans,octa-cis-undecaprenyl phosphate = di-trans,octa-cis-undecaprenyl diphospho-N-acetyl-alpha-D-muramoyl-L-alanyl-D-glutamyl-meso-2,6-diaminopimeloyl-D-alanyl-D-alanine + UMP. It participates in cell wall biogenesis; peptidoglycan biosynthesis. In terms of biological role, catalyzes the initial step of the lipid cycle reactions in the biosynthesis of the cell wall peptidoglycan: transfers peptidoglycan precursor phospho-MurNAc-pentapeptide from UDP-MurNAc-pentapeptide onto the lipid carrier undecaprenyl phosphate, yielding undecaprenyl-pyrophosphoryl-MurNAc-pentapeptide, known as lipid I. The polypeptide is Phospho-N-acetylmuramoyl-pentapeptide-transferase (Bifidobacterium adolescentis (strain ATCC 15703 / DSM 20083 / NCTC 11814 / E194a)).